Reading from the N-terminus, the 278-residue chain is Non-homologous end joining protein Ku (278 aa).

The Ku domain maps to 9–172 (ISFGLVNIPV…MHFAQELVDV (164 aa)). The disordered stretch occupies residues 255–278 (NQTGAGAKKKPAKTAKRGKSRKAA). Basic residues predominate over residues 261 to 278 (AKKKPAKTAKRGKSRKAA).

It belongs to the prokaryotic Ku family. Homodimer. Interacts with LigD.

In terms of biological role, with LigD forms a non-homologous end joining (NHEJ) DNA repair enzyme, which repairs dsDNA breaks with reduced fidelity. Binds linear dsDNA with 5'- and 3'- overhangs but not closed circular dsDNA nor ssDNA. Recruits and stimulates the ligase activity of LigD. The chain is Non-homologous end joining protein Ku from Opitutus terrae (strain DSM 11246 / JCM 15787 / PB90-1).